A 272-amino-acid chain; its full sequence is 3-deoxy-manno-octulosonate cytidylyltransferase (272 aa).

This sequence belongs to the KdsB family.

It is found in the cytoplasm. The catalysed reaction is 3-deoxy-alpha-D-manno-oct-2-ulosonate + CTP = CMP-3-deoxy-beta-D-manno-octulosonate + diphosphate. Its pathway is nucleotide-sugar biosynthesis; CMP-3-deoxy-D-manno-octulosonate biosynthesis; CMP-3-deoxy-D-manno-octulosonate from 3-deoxy-D-manno-octulosonate and CTP: step 1/1. The protein operates within bacterial outer membrane biogenesis; lipopolysaccharide biosynthesis. In terms of biological role, activates KDO (a required 8-carbon sugar) for incorporation into bacterial lipopolysaccharide in Gram-negative bacteria. The protein is 3-deoxy-manno-octulosonate cytidylyltransferase of Verminephrobacter eiseniae (strain EF01-2).